The primary structure comprises 525 residues: Acyl-lipid (9-3)-desaturase (525 aa).

A Cytochrome b5 heme-binding domain is found at 102–176 (KSTHPLSEVA…LQDFYIGDVE (75 aa)). Heme is bound by residues H137 and H159. Residues 216–236 (VAIFAASIAIICWSKTISAVL) traverse the membrane as a helical segment. The short motif at 254-258 (HDFLH) is the Histidine box-1 element. The chain crosses the membrane as a helical span at residues 266–286 (WLNEVVGYVIGNAVLGFSTGW). The short motif at 291–295 (HNLHH) is the Histidine box-2 element. Helical transmembrane passes span 340–360 (QHLF…FWSW), 378–398 (GTVL…LPGW), and 401–421 (LVWM…VFVL). A Histidine box-3 motif is present at residues 462-466 (QIEHH).

Belongs to the fatty acid desaturase type 1 family.

The protein localises to the membrane. The enzyme catalyses (9Z,12Z,15Z)-octadecatrienoyl-containing glycerolipid + 2 Fe(II)-[cytochrome b5] + O2 + 2 H(+) = (6Z,9Z,12Z,15Z)-octadecatetraenoyl-containing glycerolipid + 2 Fe(III)-[cytochrome b5] + 2 H2O. The catalysed reaction is a (9Z,12Z)-octadecadienoyl-containing glycerolipid + 2 Fe(II)-[cytochrome b5] + O2 + 2 H(+) = (6Z,9Z,12Z)-octadecatrienoyl-containing glycerolipid + 2 Fe(III)-[cytochrome b5] + 2 H2O. Its pathway is lipid metabolism; polyunsaturated fatty acid biosynthesis. Its function is as follows. Fatty acid desaturase able to introduce a delta(6)-double bond into delta(9)-unsaturated fatty-acid substrates. Can use both linoleic acid (18:2(9Z,12Z)) and alpha-linolenic acid (18:3(9Z,12Z,15Z)) as substrates. Required for the biosynthesis of arachidonic acid (20:4(5z,8Z,11Z,14Z)). The polypeptide is Acyl-lipid (9-3)-desaturase (Physcomitrium patens (Spreading-leaved earth moss)).